Here is a 310-residue protein sequence, read N- to C-terminus: Probable cell division protein WhiA (310 aa).

The segment at residues 277–310 is a DNA-binding region (H-T-H motif); it reads SLKELAEQVPDGPISKSGVNHRLKKLHEIAENLR.

It belongs to the WhiA family.

In terms of biological role, involved in cell division and chromosome segregation. The polypeptide is Probable cell division protein WhiA (Lactobacillus delbrueckii subsp. bulgaricus (strain ATCC BAA-365 / Lb-18)).